The chain runs to 302 residues: Methionyl-tRNA formyltransferase (302 aa).

Position 108–111 (108–111 (SLLP)) interacts with (6S)-5,6,7,8-tetrahydrofolate. Over residues 276–288 (REGKRPMEPEEFL) the composition is skewed to basic and acidic residues. The tract at residues 276–302 (REGKRPMEPEEFLRGFPLPEGSRAHTA) is disordered.

The protein belongs to the Fmt family.

The catalysed reaction is L-methionyl-tRNA(fMet) + (6R)-10-formyltetrahydrofolate = N-formyl-L-methionyl-tRNA(fMet) + (6S)-5,6,7,8-tetrahydrofolate + H(+). Functionally, attaches a formyl group to the free amino group of methionyl-tRNA(fMet). The formyl group appears to play a dual role in the initiator identity of N-formylmethionyl-tRNA by promoting its recognition by IF2 and preventing the misappropriation of this tRNA by the elongation apparatus. The sequence is that of Methionyl-tRNA formyltransferase from Cereibacter sphaeroides (strain KD131 / KCTC 12085) (Rhodobacter sphaeroides).